Consider the following 169-residue polypeptide: MPESSRFGHLPWLLLSVLILVADRVTKDIFEGTLSMYQRIEVIPGYFDWTLAYNTGAAFSFLADAAGWQRWFFAAIAIVVSVVLVVWLKRLKRHETLLAVALAMVLGGALGNLYDRVVLGHVVDFILVHWQSRWFFPAFNLADTFITIGAILLALDMFKSDKSAKEAAQ.

3 helical membrane passes run 1-21, 68-88, and 94-114; these read MPESSRFGHLPWLLLSVLILV, WQRWFFAAIAIVVSVVLVVWL, and HETLLAVALAMVLGGALGNLY. Catalysis depends on residues D124 and D143. The helical transmembrane segment at 135 to 155 threads the bilayer; sequence FFPAFNLADTFITIGAILLAL.

It belongs to the peptidase A8 family.

The protein localises to the cell inner membrane. The catalysed reaction is Release of signal peptides from bacterial membrane prolipoproteins. Hydrolyzes -Xaa-Yaa-Zaa-|-(S,diacylglyceryl)Cys-, in which Xaa is hydrophobic (preferably Leu), and Yaa (Ala or Ser) and Zaa (Gly or Ala) have small, neutral side chains.. The protein operates within protein modification; lipoprotein biosynthesis (signal peptide cleavage). Functionally, this protein specifically catalyzes the removal of signal peptides from prolipoproteins. This Ectopseudomonas mendocina (strain ymp) (Pseudomonas mendocina) protein is Lipoprotein signal peptidase.